Consider the following 685-residue polypeptide: E3 ubiquitin-protein ligase RNF6 (685 aa).

Basic and acidic residues-rich tracts occupy residues 1–10, 17–29, and 88–107; these read MNQSRSRSDG, PQDH…ERRW, and DLRD…SSHE. Disordered stretches follow at residues 1 to 29, 81 to 107, 121 to 142, 168 to 273, 286 to 345, and 499 to 576; these read MNQS…ERRW, EQLA…SSHE, GNAT…RTNP, DYTD…REGQ, RSNV…RRRG, and EADS…NPNN. Polar residues-rich tracts occupy residues 199–213, 250–264, and 286–297; these read SQTS…SNIP, ASRT…QSGG, and RSNVTVRNTNQR. The segment covering 303-313 has biased composition (low complexity); that stretch reads LRSTSNSRSRS. Composition is skewed to polar residues over residues 314 to 325 and 519 to 528; these read PIQRQSGTVYHN and ELSNLGTDNN. Residues 632 to 673 form an RING-type zinc finger; sequence CSVCISDYVTGNKLRQLPCMHEFHIHCIDRWLSENCTCPICR.

The protein belongs to the RNF12 family. In terms of tissue distribution, weakly expressed in peripheral blood, spleen, prostate, testis and ovary. According to a report, it is preferentially expressed in testis and ovary and hardly detected in other tissues.

It localises to the nucleus. Its subcellular location is the cytoplasm. It is found in the cell projection. The protein resides in the axon. The protein localises to the PML body. It catalyses the reaction S-ubiquitinyl-[E2 ubiquitin-conjugating enzyme]-L-cysteine + [acceptor protein]-L-lysine = [E2 ubiquitin-conjugating enzyme]-L-cysteine + N(6)-ubiquitinyl-[acceptor protein]-L-lysine.. It functions in the pathway protein modification; protein ubiquitination. Its function is as follows. E3 ubiquitin-protein ligase mediating 'Lys-48'-linked polyubiquitination of LIMK1 and its subsequent targeting to the proteasome for degradation. Negatively regulates axonal outgrowth through regulation of the LIMK1 turnover. Mediates 'Lys-6' and 'Lys-27'-linked polyubiquitination of AR/androgen receptor thereby modulating its transcriptional activity. May also bind DNA and function as a transcriptional regulator. Mediates polyubiquitination of QKI in macrophages, leading to its degradation. This Homo sapiens (Human) protein is E3 ubiquitin-protein ligase RNF6.